The sequence spans 265 residues: Phosphatidylglycerol--prolipoprotein diacylglyceryl transferase (265 aa).

7 helical membrane-spanning segments follow: residues 11 to 31 (AVSIGPLQFRWYGLMYLFGFI), 56 to 76 (MVTWAIFGVVLGGRLGYILFY), 91 to 111 (IWHGGMSFHGGLLGVLFAVWL), 120 to 140 (FLSVVDFVAPLIPPGLFFGRI), 173 to 193 (QLYEAVLEGVVLFAAVWWFSG), 198 to 218 (VGAVSGLFGVLYAIFRFAVEF), and 233 to 253 (WLTMGQVLCLPLFGVGMWLLL). Position 139 (R139) interacts with a 1,2-diacyl-sn-glycero-3-phospho-(1'-sn-glycerol).

It belongs to the Lgt family.

The protein resides in the cell inner membrane. It catalyses the reaction L-cysteinyl-[prolipoprotein] + a 1,2-diacyl-sn-glycero-3-phospho-(1'-sn-glycerol) = an S-1,2-diacyl-sn-glyceryl-L-cysteinyl-[prolipoprotein] + sn-glycerol 1-phosphate + H(+). It functions in the pathway protein modification; lipoprotein biosynthesis (diacylglyceryl transfer). In terms of biological role, catalyzes the transfer of the diacylglyceryl group from phosphatidylglycerol to the sulfhydryl group of the N-terminal cysteine of a prolipoprotein, the first step in the formation of mature lipoproteins. The chain is Phosphatidylglycerol--prolipoprotein diacylglyceryl transferase from Nitratidesulfovibrio vulgaris (strain DSM 19637 / Miyazaki F) (Desulfovibrio vulgaris).